The primary structure comprises 844 residues: SWI/SNF-related matrix-associated actin-dependent regulator of chromatin subfamily A containing DEAD/H box 1 homolog (844 aa).

Residues M1–S23 are compositionally biased toward low complexity. 2 disordered regions span residues M1 to E75 and N121 to M180. The span at I30–S42 shows a compositional bias: polar residues. Positions T301–K471 constitute a Helicase ATP-binding domain. D314–T321 provides a ligand contact to ATP. Positions D422–H425 match the DEGH box motif. The 163-residue stretch at Y656 to T818 folds into the Helicase C-terminal domain. Residues S834, S838, and S841 each carry the phosphoserine modification.

Belongs to the SNF2/RAD54 helicase family.

It is found in the nucleus. The enzyme catalyses ATP + H2O = ADP + phosphate + H(+). DNA helicase that possesses intrinsic ATP-dependent nucleosome-remodeling activity and is both required for DNA repair and heterochromatin organization. Promotes DNA end resection of double-strand breaks (DSBs) following DNA damage: probably acts by weakening histone DNA interactions in nucleosomes flanking DSBs. The chain is SWI/SNF-related matrix-associated actin-dependent regulator of chromatin subfamily A containing DEAD/H box 1 homolog (Etl1) from Drosophila melanogaster (Fruit fly).